Consider the following 260-residue polypeptide: Adenosylcobinamide-GDP ribazoletransferase (260 aa).

The next 6 membrane-spanning stretches (helical) occupy residues 43–63 (LVGT…QFIF), 64–84 (PASV…GGFH), 117–137 (GSLA…ELAL), 143–163 (VAGG…SIIF), 197–217 (VICL…TLFV), and 237–257 (TLGA…LLLW).

This sequence belongs to the CobS family. The cofactor is Mg(2+).

It localises to the cell inner membrane. It carries out the reaction alpha-ribazole + adenosylcob(III)inamide-GDP = adenosylcob(III)alamin + GMP + H(+). The enzyme catalyses alpha-ribazole 5'-phosphate + adenosylcob(III)inamide-GDP = adenosylcob(III)alamin 5'-phosphate + GMP + H(+). The protein operates within cofactor biosynthesis; adenosylcobalamin biosynthesis; adenosylcobalamin from cob(II)yrinate a,c-diamide: step 7/7. In terms of biological role, joins adenosylcobinamide-GDP and alpha-ribazole to generate adenosylcobalamin (Ado-cobalamin). Also synthesizes adenosylcobalamin 5'-phosphate from adenosylcobinamide-GDP and alpha-ribazole 5'-phosphate. The protein is Adenosylcobinamide-GDP ribazoletransferase of Shewanella amazonensis (strain ATCC BAA-1098 / SB2B).